Here is a 131-residue protein sequence, read N- to C-terminus: Large-conductance mechanosensitive channel (131 aa).

2 helical membrane passes run 14 to 34 (VMDM…VTSL) and 71 to 91 (GNFI…FLLV).

Belongs to the MscL family. As to quaternary structure, homopentamer.

The protein resides in the cell inner membrane. Channel that opens in response to stretch forces in the membrane lipid bilayer. May participate in the regulation of osmotic pressure changes within the cell. The chain is Large-conductance mechanosensitive channel from Dinoroseobacter shibae (strain DSM 16493 / NCIMB 14021 / DFL 12).